The sequence spans 1210 residues: Epidermal growth factor receptor (1210 aa).

Residues 1–24 form the signal peptide; it reads MRPSGTAGAALLALLAALCPASRA. The Extracellular segment spans residues 25-645; sequence LEEKKVCQGT…CARNGPKIPS (621 aa). A disulfide bridge links Cys31 with Cys58. The Approximate repeat unit spans residues 75–300; the sequence is DLSFLKTIQE…CVKKCPRNYV (226 aa). N-linked (GlcNAc...) asparagine glycans are attached at residues Asn128, Asn175, and Asn196. 13 cysteine pairs are disulfide-bonded: Cys157–Cys187, Cys190–Cys199, Cys194–Cys207, Cys215–Cys223, Cys219–Cys231, Cys232–Cys240, Cys236–Cys248, Cys251–Cys260, Cys264–Cys291, Cys295–Cys307, Cys311–Cys326, Cys329–Cys333, and Cys337–Cys362. Ser229 bears the Phosphoserine mark. N-linked (GlcNAc...) asparagine glycans are attached at residues Asn352, Asn361, Asn413, and Asn444. The Approximate repeat unit spans residues 390–600; it reads QELDILKTVK…CVKTCPAGVM (211 aa). 11 disulfide bridges follow: Cys470/Cys499, Cys506/Cys515, Cys510/Cys523, Cys526/Cys535, Cys539/Cys555, Cys558/Cys571, Cys562/Cys579, Cys582/Cys591, Cys595/Cys617, Cys620/Cys628, and Cys624/Cys636. Residue Asn528 is glycosylated (N-linked (GlcNAc...) asparagine). An N-linked (GlcNAc...) asparagine glycan is attached at Asn568. N-linked (GlcNAc...) asparagine glycosylation is present at Asn603. Residues 646–668 traverse the membrane as a helical segment; that stretch reads IATGMVGALLLLLVVALGIGLFM. The Cytoplasmic segment spans residues 669–1210; the sequence is RRRHIVRKRT…APQSSEFIGA (542 aa). Residue Thr678 is modified to Phosphothreonine; by PKC and PKD/PRKD1. An important for dimerization, phosphorylation and activation region spans residues 688-704; it reads LVEPLTPSGEAPNQALL. Residue Thr693 is modified to Phosphothreonine; by PKD/PRKD1. Ser695 carries the post-translational modification Phosphoserine. In terms of domain architecture, Protein kinase spans 712-979; that stretch reads FKKIKVLGSG…KMARDPQRYL (268 aa). Lys716 is covalently cross-linked (Glycyl lysine isopeptide (Lys-Gly) (interchain with G-Cter in ubiquitin)). 718 to 726 serves as a coordination point for ATP; it reads LGSGAFGTV. A Glycyl lysine isopeptide (Lys-Gly) (interchain with G-Cter in ubiquitin) cross-link involves residue Lys737. Lys745 contacts ATP. Lys745 is subject to N6-(2-hydroxyisobutyryl)lysine. Residues Lys754 and Lys757 each participate in a glycyl lysine isopeptide (Lys-Gly) (interchain with G-Cter in ubiquitin) cross-link. 790–791 contacts ATP; sequence TQ. Residue Asp837 is the Proton acceptor of the active site. Asp855 lines the ATP pocket. Residue Lys867 forms a Glycyl lysine isopeptide (Lys-Gly) (interchain with G-Cter in ubiquitin) linkage. Tyr869 is subject to Phosphotyrosine. Glycyl lysine isopeptide (Lys-Gly) (interchain with G-Cter in ubiquitin) cross-links involve residues Lys929, Lys960, and Lys970. Phosphoserine is present on residues Ser991 and Ser995. Tyr998 and Tyr1016 each carry phosphotyrosine; by autocatalysis. Phosphoserine is present on residues Ser1026 and Ser1039. Thr1041 is modified (phosphothreonine). Residue Ser1042 is modified to Phosphoserine. Cys1049 is lipidated: S-palmitoyl cysteine. Residue Ser1064 is modified to Phosphoserine. Tyr1069 is modified (phosphotyrosine). Phosphoserine is present on residues Ser1070, Ser1071, and Ser1081. Residues Tyr1092 and Tyr1110 each carry the phosphotyrosine; by autocatalysis modification. The disordered stretch occupies residues 1097-1137; the sequence is VPKRPAGSVQNPVYHNQPLNPAPSRDPHYQDPHSTAVGNPE. 2 stretches are compositionally biased toward polar residues: residues 1104 to 1115 and 1128 to 1137; these read SVQNPVYHNQPL and PHSTAVGNPE. Cys1146 is lipidated: S-palmitoyl cysteine. A Phosphoserine modification is found at Ser1166. 2 positions are modified to phosphotyrosine; by autocatalysis: Tyr1172 and Tyr1197. Arg1199 carries the post-translational modification Omega-N-methylarginine.

The protein belongs to the protein kinase superfamily. Tyr protein kinase family. EGF receptor subfamily. Binding of the ligand triggers homo- and/or heterodimerization of the receptor triggering its autophosphorylation. Heterodimer with ERBB2. Forms a complex with CCDC88A/GIV (via SH2-like regions) and GNAI3 which leads to enhanced EGFR signaling and triggering of cell migration; binding to CCDC88A requires autophosphorylation of the EGFR C-terminal region, and ligand stimulation is required for recruitment of GNAI3 to the complex. Interacts with ERRFI1; inhibits dimerization of the kinase domain and autophosphorylation. Part of a complex with ERBB2 and either PIK3C2A or PIK3C2B. Interacts with GRB2; an adapter protein coupling the receptor to downstream signaling pathways. Interacts with GAB2; involved in signaling downstream of EGFR. Interacts with STAT3; mediates EGFR downstream signaling in cell proliferation. Interacts with RIPK1; involved in NF-kappa-B activation. Interacts (autophosphorylated) with CBL, CBLB and CBLC; involved in EGFR ubiquitination and regulation; interaction with CBL is reduced in the presence of tensin TNS4. Interacts with SOCS5; regulates EGFR degradation through ELOC- and ELOB-mediated ubiquitination and proteasomal degradation. Interacts with PRMT5; methylates EGFR and enhances interaction with PTPN6. Interacts (phosphorylated) with PTPN6; inhibits EGFR-dependent activation of MAPK/ERK. Interacts with COPG1; essential for regulation of EGF-dependent nuclear transport of EGFR by retrograde trafficking from the Golgi to the ER. Interacts with TNK2; this interaction is dependent on EGF stimulation and kinase activity of EGFR. Interacts with PCNA; positively regulates PCNA. Interacts with PELP1. Interacts with MUC1. Interacts with AP2M1. Interacts with FER. May interact with EPS8; mediates EPS8 phosphorylation. Interacts (via SH2 domains) with GRB2, NCK1 and NCK2. Interacts with ATXN2. Interacts with GAREM1. Interacts (ubiquitinated) with ANKRD13A/B/D; the interaction is direct and may regulate EGFR internalization after EGF stimulation. Interacts with GPER1; the interaction occurs in an estrogen-dependent manner. Interacts (via C-terminal cytoplasmic kinase domain) with ZPR1 (via zinc fingers). Interacts with RNF115 and RNF126. Interacts with GPRC5A (via its transmembrane domain). Interacts with FAM83B; positively regulates EGFR inducing its autophosphorylation in absence of stimulation by EGF. Interacts with LAPTM4B; positively correlates with EGFR activation. Interacts with STX19. Interacts with CD44. Interacts with PGRMC1; the interaction requires PGRMC1 homodimerization. Interacts with PIKFYVE. Interacts with NEU3. Interacts with TRAF4. Interacts with the ant venom OMEGA-myrmeciitoxin(02)-Mg1a. Interacts with CD82; this interaction facilitates ligand-induced endocytosis of the receptor and its subsequent desensitization. Phosphorylated on Tyr residues in response to EGF. Phosphorylation at Ser-695 is partial and occurs only if Thr-693 is phosphorylated. Phosphorylation at Thr-678 and Thr-693 by PRKD1 inhibits EGF-induced MAPK8/JNK1 activation. Dephosphorylation by PTPRJ prevents endocytosis and stabilizes the receptor at the plasma membrane. Autophosphorylation at Tyr-1197 is stimulated by methylation at Arg-1199 and enhances interaction with PTPN6. Autophosphorylation at Tyr-1092 and/or Tyr-1110 recruits STAT3. Dephosphorylated by PTPN1 and PTPN2. Post-translationally, monoubiquitinated and polyubiquitinated upon EGF stimulation; which does not affect tyrosine kinase activity or signaling capacity but may play a role in lysosomal targeting. Polyubiquitin linkage is mainly through 'Lys-63', but linkage through 'Lys-48', 'Lys-11' and 'Lys-29' also occurs. Deubiquitination by OTUD7B prevents degradation. Ubiquitinated by RNF115 and RNF126. Ubiquitinated by ZNRF1 or CBL at different lysines in response to EGF stimulation; leading to recruitment of the ESCRT machinery and subsequent degradation in the lysosomes. Deubiquitinated by UCHL1 leading to the inhibition of its degradation. In terms of processing, palmitoylated on Cys residues by ZDHHC20. Palmitoylation inhibits internalization after ligand binding, and increases the persistence of tyrosine-phosphorylated EGFR at the cell membrane. Palmitoylation increases the amplitude and duration of EGFR signaling. Methylated. Methylation at Arg-1199 by PRMT5 stimulates phosphorylation at Tyr-1197. Hypothalamus.

It localises to the cell membrane. Its subcellular location is the endoplasmic reticulum membrane. The protein localises to the golgi apparatus membrane. It is found in the nucleus membrane. The protein resides in the endosome. It localises to the endosome membrane. Its subcellular location is the nucleus. The enzyme catalyses L-tyrosyl-[protein] + ATP = O-phospho-L-tyrosyl-[protein] + ADP + H(+). Its activity is regulated as follows. Endocytosis and inhibition of the activated EGFR by phosphatases like PTPRJ and PTPRK constitute immediate regulatory mechanisms. Upon EGF-binding phosphorylates EPS15 that regulates EGFR endocytosis and activity. Moreover, inducible feedback inhibitors including LRIG1, SOCS4, SOCS5 and ERRFI1 constitute alternative regulatory mechanisms for the EGFR signaling. Functionally, receptor tyrosine kinase binding ligands of the EGF family and activating several signaling cascades to convert extracellular cues into appropriate cellular responses. Known ligands include EGF, TGFA/TGF-alpha, AREG, epigen/EPGN, BTC/betacellulin, epiregulin/EREG and HBEGF/heparin-binding EGF. Ligand binding triggers receptor homo- and/or heterodimerization and autophosphorylation on key cytoplasmic residues. The phosphorylated receptor recruits adapter proteins like GRB2 which in turn activates complex downstream signaling cascades. Activates at least 4 major downstream signaling cascades including the RAS-RAF-MEK-ERK, PI3 kinase-AKT, PLCgamma-PKC and STATs modules. May also activate the NF-kappa-B signaling cascade. Also directly phosphorylates other proteins like RGS16, activating its GTPase activity and probably coupling the EGF receptor signaling to the G protein-coupled receptor signaling. Also phosphorylates MUC1 and increases its interaction with SRC and CTNNB1/beta-catenin. Positively regulates cell migration via interaction with CCDC88A/GIV which retains EGFR at the cell membrane following ligand stimulation, promoting EGFR signaling which triggers cell migration. Plays a role in enhancing learning and memory performance. Plays a role in mammalian pain signaling (long-lasting hypersensitivity). The polypeptide is Epidermal growth factor receptor (EGFR) (Macaca mulatta (Rhesus macaque)).